Consider the following 1061-residue polypeptide: DNA polymerase (1061 aa).

A disordered region spans residues 773–792; it reads NSEAEESDEDQGPAPFYSPP.

This sequence belongs to the DNA polymerase type-B family. Heterodimer with the terminal protein; this heterodimer binds to bp 9 to 18 of the genome. Forms a complex with viral pTP, DBP and hosts NFIA and POU2F1/OCT1 for initiation of replication.

The protein localises to the host nucleus. The catalysed reaction is DNA(n) + a 2'-deoxyribonucleoside 5'-triphosphate = DNA(n+1) + diphosphate. In terms of biological role, eukaryotic-type DNA polymerase involved in viral genomic replication. DNA synthesis is protein primed, and acts in a strand displacement replication. Assembles in complex with viral pTP, DBP, host NFIA and host POU2F1/OCT1 on viral origin of replication. The polymerase covalently transfers dCMP onto pTP, thereby initiating complementary strand synthesis. The chain is DNA polymerase from Human adenovirus A serotype 12 (HAdV-12).